Consider the following 125-residue polypeptide: UPF0231 protein APL_0968 (125 aa).

The protein belongs to the UPF0231 family.

The protein is UPF0231 protein APL_0968 of Actinobacillus pleuropneumoniae serotype 5b (strain L20).